The following is a 710-amino-acid chain: Early transcription factor 82 kDa subunit (710 aa).

Belongs to the poxviridae VETF large subunit family. As to quaternary structure, heterodimer of a 70 kDa and a 82 kDa subunit. Part of the early transcription complex composed of ETF, RAP94/OPG109, and the DNA-directed RNA polymerase.

The protein localises to the virion. Its function is as follows. Acts with RNA polymerase to initiate transcription from early gene promoters. Is recruited by the RPO-associated protein of 94 kDa RAP94/OPG109 to form the early transcription complex, which also contains the core RNA polymerase. ETF heterodimer binds to early gene promoters. This chain is Early transcription factor 82 kDa subunit (OPG133), found in Bos taurus (Bovine).